Consider the following 403-residue polypeptide: Dynactin subunit 2-B (403 aa).

Residues 1–26 (MADPKYADLPGIARNEPDLYETSDLP) are disordered. The stretch at 99–132 (PQQKYQRLLHEVQELTQEVEKTQSTLKESATEEK) forms a coiled coil. Positions 183–206 (AAKTRKDPEGKSSAKGPGPDNENL) are disordered. The span at 184-194 (AKTRKDPEGKS) shows a compositional bias: basic and acidic residues. The stretch at 381–401 (KENLATVEDNFSSIDGRIKKL) forms a coiled coil.

It belongs to the dynactin subunit 2 family. As to quaternary structure, subunit of dynactin, a multiprotein complex part of a tripartite complex with dynein and a adapter, such as BICDL1, BICD2 or HOOK3. The dynactin complex is built around ACTR1A/ACTB filament and consists of an actin-related filament composed of a shoulder domain, a pointed end and a barbed end. Its length is defined by its flexible shoulder domain. The soulder is composed of 2 DCTN1 subunits, 4 DCTN2 and 2 DCTN3.

It localises to the cytoplasm. Its subcellular location is the cytoskeleton. The protein resides in the microtubule organizing center. It is found in the centrosome. The protein localises to the membrane. In terms of biological role, part of the dynactin complex that activates the molecular motor dynein for ultra-processive transport along microtubules. In the dynactin soulder domain, binds the ACTR1A filament and acts as a molecular ruler to determine the length. Modulates cytoplasmic dynein binding to an organelle, and plays a role in prometaphase chromosome alignment and spindle organization during mitosis. Involved in anchoring microtubules to centrosomes. The chain is Dynactin subunit 2-B (dctn2-b) from Xenopus laevis (African clawed frog).